The following is a 627-amino-acid chain: Carene synthase 2, chloroplastic (627 aa).

A chloroplast-targeting transit peptide spans 1–36 (MSVISIVPLASKSCLYKSLMSSTHELKALCRPIVTL). The Mg(2+) site is built by aspartate 378, aspartate 382, and aspartate 530. The DDXXD motif motif lies at 378-382 (DDMYD).

Belongs to the terpene synthase family. Tpsd subfamily. Mg(2+) is required as a cofactor. Requires Mn(2+) as cofactor.

The protein localises to the plastid. It localises to the chloroplast. It catalyses the reaction (2E)-geranyl diphosphate = (+)-car-3-ene + diphosphate. The protein operates within terpene metabolism; oleoresin biosynthesis. In terms of biological role, terpene synthase (TPS) involved in defensive oleoresin formation in conifers in response to insect attack (e.g. white pine weevil P.strobi) or other injury. The sequence is that of Carene synthase 2, chloroplastic (TPS-3car2) from Picea sitchensis (Sitka spruce).